Consider the following 287-residue polypeptide: ATP synthase gamma chain (287 aa).

Belongs to the ATPase gamma chain family. As to quaternary structure, F-type ATPases have 2 components, CF(1) - the catalytic core - and CF(0) - the membrane proton channel. CF(1) has five subunits: alpha(3), beta(3), gamma(1), delta(1), epsilon(1). CF(0) has three main subunits: a, b and c.

The protein localises to the cell membrane. Its function is as follows. Produces ATP from ADP in the presence of a proton gradient across the membrane. The gamma chain is believed to be important in regulating ATPase activity and the flow of protons through the CF(0) complex. The protein is ATP synthase gamma chain of Staphylococcus carnosus (strain TM300).